The sequence spans 259 residues: Putative carbamate hydrolase RutD (259 aa).

This sequence belongs to the AB hydrolase superfamily. Hydrolase RutD family.

It catalyses the reaction carbamate + 2 H(+) = NH4(+) + CO2. Involved in pyrimidine catabolism. May facilitate the hydrolysis of carbamate, a reaction that can also occur spontaneously. The protein is Putative carbamate hydrolase RutD of Pseudomonas syringae pv. syringae (strain B728a).